The chain runs to 440 residues: Chromosomal replication initiator protein DnaA (440 aa).

Residues 1–74 (MNPSQILENL…VQSGNKAIIN (74 aa)) form a domain I, interacts with DnaA modulators region. The segment at 74–99 (NIQAQSAKQSNKSTKIDIAHIKAQST) is domain II. The domain III, AAA+ region stretch occupies residues 100-316 (ILNPSFTFDS…GIIISLNAYA (217 aa)). ATP is bound by residues glycine 146, glycine 148, lysine 149, and threonine 150. The interval 317-440 (TILGQEITLE…KNKILVKSQS (124 aa)) is domain IV, binds dsDNA.

This sequence belongs to the DnaA family. Oligomerizes as a right-handed, spiral filament on DNA at oriC.

It localises to the cytoplasm. Functionally, plays an essential role in the initiation and regulation of chromosomal replication. ATP-DnaA binds to the origin of replication (oriC) to initiate formation of the DNA replication initiation complex once per cell cycle. Binds the DnaA box (a 9 base pair repeat at the origin) and separates the double-stranded (ds)DNA. Forms a right-handed helical filament on oriC DNA; dsDNA binds to the exterior of the filament while single-stranded (ss)DNA is stabiized in the filament's interior. The ATP-DnaA-oriC complex binds and stabilizes one strand of the AT-rich DNA unwinding element (DUE), permitting loading of DNA polymerase. After initiation quickly degrades to an ADP-DnaA complex that is not apt for DNA replication. Binds acidic phospholipids. The polypeptide is Chromosomal replication initiator protein DnaA (Campylobacter jejuni subsp. jejuni serotype O:23/36 (strain 81-176)).